The sequence spans 175 residues: Peptide deformylase (175 aa).

Residues C96 and H138 each coordinate Fe cation. E139 is an active-site residue. H142 contacts Fe cation.

This sequence belongs to the polypeptide deformylase family. Requires Fe(2+) as cofactor.

The enzyme catalyses N-terminal N-formyl-L-methionyl-[peptide] + H2O = N-terminal L-methionyl-[peptide] + formate. Removes the formyl group from the N-terminal Met of newly synthesized proteins. Requires at least a dipeptide for an efficient rate of reaction. N-terminal L-methionine is a prerequisite for activity but the enzyme has broad specificity at other positions. The protein is Peptide deformylase of Rhodopseudomonas palustris (strain BisB5).